The chain runs to 240 residues: Membrane-spanning 4-domains subfamily A member 7 (240 aa).

Residues 1–47 lie on the Cytoplasmic side of the membrane; that stretch reads MLLQSQTMGVSHSFTPKGITIPQREKPGHMYQNEDYLQNGLPTETTV. The helical transmembrane segment at 48 to 68 threads the bilayer; it reads LGTVQILCCLLISSLGAILVF. Residues 69–83 lie on the Extracellular side of the membrane; it reads APYPSHFNPAISTTL. Residues 84–104 traverse the membrane as a helical segment; that stretch reads MSGYPFLGALCFGITGSLSII. Residues 105–121 are Cytoplasmic-facing; sequence SGKQSTKPFDLSSLTSN. Residues 122–142 traverse the membrane as a helical segment; the sequence is AVSSVTAGAGLFLLADSMVAL. The Extracellular segment spans residues 143–178; the sequence is RTASQHCGSEMDYLSSLPYSEYYYPIYEIKDCLLTS. A helical transmembrane segment spans residues 179 to 199; it reads VSLTGVLVVMLIFTVLELLLA. Over 200–240 the chain is Cytoplasmic; it reads AYSSVFWWKQLYSNNPGSSFSSTQSQDHIQQVKKSSSRSWI. Positions 218–240 are disordered; the sequence is SFSSTQSQDHIQQVKKSSSRSWI.

The protein belongs to the MS4A family. Ubiquitous expression in normal tissues. Expression is more elevated in adult liver, lung, spleen, and heart than in their fetal counterparts, and is higher in normal tissues than in the cancerous tissue or cell lines. Low levels of expression were detected in the promonocytic stage, whereas high levels of expression were detected in mature monocytes.

Its subcellular location is the membrane. Its function is as follows. May be involved in signal transduction as a component of a multimeric receptor complex. In Homo sapiens (Human), this protein is Membrane-spanning 4-domains subfamily A member 7 (MS4A7).